The chain runs to 299 residues: Lipoyl synthase 2 (299 aa).

The [4Fe-4S] cluster site is built by cysteine 45, cysteine 50, cysteine 56, cysteine 71, cysteine 75, cysteine 78, and serine 295. Residues 57-284 form the Radical SAM core domain; it reads YASGTATFLL…KSFCSKLGFK (228 aa).

Belongs to the radical SAM superfamily. Lipoyl synthase family. The cofactor is [4Fe-4S] cluster.

The protein localises to the cytoplasm. The catalysed reaction is [[Fe-S] cluster scaffold protein carrying a second [4Fe-4S](2+) cluster] + N(6)-octanoyl-L-lysyl-[protein] + 2 oxidized [2Fe-2S]-[ferredoxin] + 2 S-adenosyl-L-methionine + 4 H(+) = [[Fe-S] cluster scaffold protein] + N(6)-[(R)-dihydrolipoyl]-L-lysyl-[protein] + 4 Fe(3+) + 2 hydrogen sulfide + 2 5'-deoxyadenosine + 2 L-methionine + 2 reduced [2Fe-2S]-[ferredoxin]. The protein operates within protein modification; protein lipoylation via endogenous pathway; protein N(6)-(lipoyl)lysine from octanoyl-[acyl-carrier-protein]: step 2/2. In terms of biological role, catalyzes the radical-mediated insertion of two sulfur atoms into the C-6 and C-8 positions of the octanoyl moiety bound to the lipoyl domains of lipoate-dependent enzymes, thereby converting the octanoylated domains into lipoylated derivatives. The sequence is that of Lipoyl synthase 2 from Prochlorococcus marinus subsp. pastoris (strain CCMP1986 / NIES-2087 / MED4).